We begin with the raw amino-acid sequence, 153 residues long: Small ribosomal subunit protein bS16 (153 aa).

Residues 130-153 (EAEAAAAAEEAPAEEAAEEAPAEA) are disordered. The span at 140-153 (APAEEAAEEAPAEA) shows a compositional bias: acidic residues.

This sequence belongs to the bacterial ribosomal protein bS16 family.

This is Small ribosomal subunit protein bS16 from Bifidobacterium longum (strain NCC 2705).